Here is a 605-residue protein sequence, read N- to C-terminus: Elongation factor 4 (605 aa).

One can recognise a tr-type G domain in the interval 11 to 193 (KRIRNFSIIA…KVVSNIPSPR (183 aa)). GTP-binding positions include 23–28 (DHGKST) and 140–143 (NKID).

Belongs to the TRAFAC class translation factor GTPase superfamily. Classic translation factor GTPase family. LepA subfamily.

The protein localises to the cell membrane. The enzyme catalyses GTP + H2O = GDP + phosphate + H(+). In terms of biological role, required for accurate and efficient protein synthesis under certain stress conditions. May act as a fidelity factor of the translation reaction, by catalyzing a one-codon backward translocation of tRNAs on improperly translocated ribosomes. Back-translocation proceeds from a post-translocation (POST) complex to a pre-translocation (PRE) complex, thus giving elongation factor G a second chance to translocate the tRNAs correctly. Binds to ribosomes in a GTP-dependent manner. This chain is Elongation factor 4, found in Phytoplasma mali (strain AT).